The sequence spans 1044 residues: Multiple epidermal growth factor-like domains protein 11 (1044 aa).

Residues 1-19 (MVLSLTGLIAFSFLQATLA) form the signal peptide. Topologically, residues 20–848 (LNPEDPNVCS…SPALGAERHS (829 aa)) are extracellular. The EMI domain maps to 24 to 101 (DPNVCSHWES…YYESGDFCIP (78 aa)). Cystine bridges form between Cys-28/Cys-89, Cys-54/Cys-63, Cys-88/Cys-99, Cys-103/Cys-118, Cys-120/Cys-129, Cys-146/Cys-154, Cys-148/Cys-161, Cys-163/Cys-172, Cys-185/Cys-197, Cys-191/Cys-204, Cys-206/Cys-215, Cys-228/Cys-240, Cys-234/Cys-247, and Cys-249/Cys-258. 9 consecutive EGF-like domains span residues 95–130 (SGDF…PDCS), 143–173 (SNRC…WRCE), 181–216 (HGKG…VYCE), 224–259 (HGAH…AVCA), 267–302 (FGQN…DRCQ), 310–345 (FGFQ…PRCQ), 399–434 (YGDG…EVCA), 442–477 (YGPN…LDCT), and 490–520 (NESC…DTCE). Asn-270 carries N-linked (GlcNAc...) asparagine glycosylation. 15 disulfide bridges follow: Cys-271–Cys-283, Cys-277–Cys-290, Cys-292–Cys-301, Cys-314–Cys-326, Cys-320–Cys-333, Cys-335–Cys-344, Cys-403–Cys-415, Cys-409–Cys-422, Cys-424–Cys-433, Cys-446–Cys-458, Cys-452–Cys-465, Cys-467–Cys-476, Cys-493–Cys-501, Cys-495–Cys-508, and Cys-510–Cys-519. N-linked (GlcNAc...) asparagine glycosylation is present at Asn-531. 5 EGF-like domains span residues 571–606 (WGPN…PLCQ), 659–694 (FGQD…KDCS), 707–737 (FHAC…LFCT), 750–780 (GRVC…QHCE), and 788–823 (FGYG…IRCD). Disulfide bonds link Cys-575–Cys-587, Cys-581–Cys-594, Cys-596–Cys-605, Cys-663–Cys-675, Cys-669–Cys-682, Cys-684–Cys-693, Cys-710–Cys-718, Cys-712–Cys-725, Cys-727–Cys-736, Cys-753–Cys-761, Cys-755–Cys-768, Cys-770–Cys-779, Cys-792–Cys-804, Cys-798–Cys-811, and Cys-813–Cys-822. The chain crosses the membrane as a helical span at residues 849 to 869 (VGAVTGIMLLLFLIVVLLGLF). Residues 870–1044 (AWHRRRQKEK…ANGPSQDKQS (175 aa)) lie on the Cytoplasmic side of the membrane. Positions 1023-1044 (GHYDLLPVRQSPANGPSQDKQS) are disordered. Positions 1033 to 1044 (SPANGPSQDKQS) are enriched in polar residues.

The protein belongs to the MEGF family. As to quaternary structure, homomer. Does not interact with MEGF10.

It is found in the cell membrane. Its subcellular location is the basolateral cell membrane. Its function is as follows. May regulate the mosaic spacing of specific neuron subtypes in the retina through homotypic retinal neuron repulsion. Mosaics provide a mechanism to distribute each cell type evenly across the retina, ensuring that all parts of the visual field have access to a full set of processing elements. The chain is Multiple epidermal growth factor-like domains protein 11 (MEGF11) from Homo sapiens (Human).